Reading from the N-terminus, the 687-residue chain is TWiK family of potassium channels protein 12 (687 aa).

At 1–21 the chain is on the cytoplasmic side; that stretch reads MTLFQKLQWFCQLIRLRAYYK. The chain crosses the membrane as a helical span at residues 22 to 42; the sequence is FLLLIAYTLFGAWLFRFYELQ. 3 N-linked (GlcNAc...) asparagine glycosylation sites follow: Asn53, Asn77, and Asn98. Positions 112 to 132 form an intramembrane region, pore-forming; sequence WTWTGAMFYAGQLYTTIGYGY. Residues 142 to 162 traverse the membrane as a helical segment; the sequence is ICTVLYALFGIPCFLMYLKAI. Residues 163 to 212 lie on the Cytoplasmic side of the membrane; the sequence is GKTLSKRLKKIYKRVRRSAFGKFLLPTRVTATKDGFEDPDASAEERKRKP. The helical transmembrane segment at 213–233 threads the bilayer; sequence FPIPIAIILLIIWICFSASMF. The pore-forming intramembrane region spans 242–262; that stretch reads FPSAVYFFIVSISTVGLGDML. Residues 270–290 form a helical membrane-spanning segment; sequence VFNFLLILFGLALLSMCFELI. At 291–687 the chain is on the cytoplasmic side; sequence TDRIAKWKQK…SKRDAPVNIV (397 aa). Positions 661–687 are disordered; sequence SPSTSTSTSMIDSGYDLSKRDAPVNIV. Residues 677–687 are compositionally biased toward basic and acidic residues; it reads LSKRDAPVNIV.

Belongs to the two pore domain potassium channel (TC 1.A.1.8) family.

It is found in the membrane. This Caenorhabditis briggsae protein is TWiK family of potassium channels protein 12.